A 503-amino-acid polypeptide reads, in one-letter code: MEIRAEEISEIIRKQIKEYGKEVEVAETGTIISVGDGIARIHGLDKAMAGELLEFPGGVSGMVLNLEEDNVGAAILGEDNENIKEGTTVKRTGRIVEVPVGEALIGRVVNAIGQPIDGKGPINTSTFGKVEVKAPGIVKRKSVHQPMQTGLKAIDAMVPVGRGQRELIIGDRQTGKTAVAIDTIINQKGGDLICIYVAIGQKRSTVAQVVSKLQEHGAMDYTIIVSASASEPAPLQFIAPYTGVTMGEYFRDNGKHALIIYDDLSKQAVAYRQLSLLLRRPPGREAYPGDVFYLHSRLLERAAKLSDDCGAGSLTALPIIETQAGDVSAYIPTNVISITDGQIYLESDLFYSGVRPAINVGLSVSRVGGSAQVKAMKQVAGTLRLNLAQYREMAAFAQFGSDLDKATQMQLARGERLVEILKQPQYRPIPNEKQVLIIFAANNGYVDDYPVASLRRYESELYSFFDGRKADILAELRDKKAIDDDLKGKIVAALDEFKKEFTA.

170 to 177 (GDRQTGKT) serves as a coordination point for ATP.

This sequence belongs to the ATPase alpha/beta chains family. In terms of assembly, F-type ATPases have 2 components, CF(1) - the catalytic core - and CF(0) - the membrane proton channel. CF(1) has five subunits: alpha(3), beta(3), gamma(1), delta(1), epsilon(1). CF(0) has three main subunits: a(1), b(2) and c(9-12). The alpha and beta chains form an alternating ring which encloses part of the gamma chain. CF(1) is attached to CF(0) by a central stalk formed by the gamma and epsilon chains, while a peripheral stalk is formed by the delta and b chains.

Its subcellular location is the cell inner membrane. It catalyses the reaction ATP + H2O + 4 H(+)(in) = ADP + phosphate + 5 H(+)(out). Produces ATP from ADP in the presence of a proton gradient across the membrane. The alpha chain is a regulatory subunit. This Geobacter metallireducens (strain ATCC 53774 / DSM 7210 / GS-15) protein is ATP synthase subunit alpha.